The primary structure comprises 337 residues: Eukaryotic translation initiation factor 3 subunit H (337 aa).

The MPN domain maps to 21 to 153 (VQCDGLAVMK…LKAYRLTPQA (133 aa)).

The protein belongs to the eIF-3 subunit H family. In terms of assembly, component of the eukaryotic translation initiation factor 3 (eIF-3) complex. The eIF-3 complex interacts with pix. Interacts with mxt.

The protein resides in the cytoplasm. Its function is as follows. Component of the eukaryotic translation initiation factor 3 (eIF-3) complex, which is involved in protein synthesis of a specialized repertoire of mRNAs and, together with other initiation factors, stimulates binding of mRNA and methionyl-tRNAi to the 40S ribosome. The eIF-3 complex specifically targets and initiates translation of a subset of mRNAs involved in cell proliferation. The chain is Eukaryotic translation initiation factor 3 subunit H from Drosophila pseudoobscura pseudoobscura (Fruit fly).